The chain runs to 159 residues: Ribosomal RNA large subunit methyltransferase H (159 aa).

S-adenosyl-L-methionine-binding positions include L76, G108, and 127-132; that span reads FSKMTF.

It belongs to the RNA methyltransferase RlmH family. Homodimer.

The protein localises to the cytoplasm. The enzyme catalyses pseudouridine(1915) in 23S rRNA + S-adenosyl-L-methionine = N(3)-methylpseudouridine(1915) in 23S rRNA + S-adenosyl-L-homocysteine + H(+). Functionally, specifically methylates the pseudouridine at position 1915 (m3Psi1915) in 23S rRNA. This Geobacillus thermodenitrificans (strain NG80-2) protein is Ribosomal RNA large subunit methyltransferase H.